A 261-amino-acid chain; its full sequence is Thioesterase TesA (261 aa).

Residues 1-24 (MLARHGPRYGGSVNGHSDDSSGDA) are disordered. Active-site residues include Ser-104, Asp-208, and His-236.

This sequence belongs to the thioesterase family.

It catalyses the reaction a fatty acyl-CoA + H2O = a fatty acid + CoA + H(+). Its function is as follows. Involved in the synthesis of both phthiocerol dimycocerosates (PDIMs) and phenolic glycolipids (PGLs), which are structurally related lipids non-covalently bound to the outer cell wall layer of M.tuberculosis and are important virulence factors. This Mycobacterium bovis (strain ATCC BAA-935 / AF2122/97) protein is Thioesterase TesA (tesA).